The following is a 904-amino-acid chain: Patched domain-containing protein 4 (904 aa).

The helical transmembrane segment at 41–61 (HPVFFLTVPAVLTITFGLSAL) threads the bilayer. Residue N149 is glycosylated (N-linked (GlcNAc...) asparagine). Residues 291–450 (TRSKVLVSLV…FSFFGSCLVF (160 aa)) enclose the SSD domain. 6 consecutive transmembrane segments (helical) span residues 295 to 312 (VLVS…SSSM), 323 to 343 (GLLG…IFFI), 351 to 371 (TLLG…FELL), 394 to 414 (VMVT…MGAS), 431 to 451 (VSIL…LVFA), and 523 to 543 (PFVV…CLQI). Residue N625 is glycosylated (N-linked (GlcNAc...) asparagine). A run of 3 helical transmembrane segments spans residues 718–738 (PVLI…FLVI), 744–764 (FWLI…MTLW), and 771–791 (ISIL…APLL). N820 carries an N-linked (GlcNAc...) asparagine glycan. The next 2 helical transmembrane spans lie at 823–843 (SFLI…FTLF) and 845–865 (CLLL…PVFL).

Belongs to the patched family.

The protein localises to the membrane. Could act as a repressor of canonical hedgehog signaling by antagonizing the effects of SMO, as suggested by down-regulation of hedgehog target genes, including GLI1, PTCH1, and PTCH2 in PTCHD4-expressing cells. In Mus musculus (Mouse), this protein is Patched domain-containing protein 4 (Ptchd4).